A 393-amino-acid chain; its full sequence is Transcription factor bHLH112 (393 aa).

2 disordered regions span residues 248 to 277 (TRAQ…SPLP) and 332 to 356 (KQGA…NENH). Residues 254–265 (SLKRAKDNESAA) show a composition bias toward basic and acidic residues. One can recognise a bHLH domain in the interval 270–319 (VTTPSPLPTFKVRKENLRDQITSLQQLVSPFGKTDTASVLQEAIEYIKFL). Low complexity predominate over residues 332 to 347 (KQGASNQQQQQISGKS).

As to quaternary structure, homodimer.

The protein resides in the nucleus. The protein is Transcription factor bHLH112 (BHLH112) of Arabidopsis thaliana (Mouse-ear cress).